The sequence spans 254 residues: Trypsin 3A1 (254 aa).

The first 20 residues, 1–20 (MNQFLFVSFCALLGLSQVSA), serve as a signal peptide directing secretion. A propeptide spans 21–27 (ATLSSGR) (activation peptide). The region spanning 28–253 (IVGGFQIDIA…VRQWIREVSE (226 aa)) is the Peptidase S1 domain. Cys-53 and Cys-69 form a disulfide bridge. Residues His-68 and Asp-113 each act as charge relay system in the active site. Cystine bridges form between Cys-178/Cys-194 and Cys-205/Cys-229. The active-site Charge relay system is the Ser-209.

It belongs to the peptidase S1 family. In terms of tissue distribution, midgut.

The protein resides in the secreted. It is found in the extracellular space. It carries out the reaction Preferential cleavage: Arg-|-Xaa, Lys-|-Xaa.. Major function may be to aid in digestion of the blood meal. The polypeptide is Trypsin 3A1 (Aedes aegypti (Yellowfever mosquito)).